A 325-amino-acid chain; its full sequence is ATP synthase gamma chain (325 aa).

It belongs to the ATPase gamma chain family. As to quaternary structure, F-type ATPases have 2 components, CF(1) - the catalytic core - and CF(0) - the membrane proton channel. CF(1) has five subunits: alpha(3), beta(3), gamma(1), delta(1), epsilon(1). CF(0) has three main subunits: a, b and c.

It is found in the cell membrane. Produces ATP from ADP in the presence of a proton gradient across the membrane. The gamma chain is believed to be important in regulating ATPase activity and the flow of protons through the CF(0) complex. The sequence is that of ATP synthase gamma chain from Corynebacterium glutamicum (strain R).